A 506-amino-acid chain; its full sequence is Lysine--tRNA ligase (506 aa).

Residues E416 and E423 each coordinate Mg(2+).

The protein belongs to the class-II aminoacyl-tRNA synthetase family. In terms of assembly, homodimer. Requires Mg(2+) as cofactor.

It is found in the cytoplasm. It carries out the reaction tRNA(Lys) + L-lysine + ATP = L-lysyl-tRNA(Lys) + AMP + diphosphate. The chain is Lysine--tRNA ligase from Bordetella bronchiseptica (strain ATCC BAA-588 / NCTC 13252 / RB50) (Alcaligenes bronchisepticus).